Consider the following 337-residue polypeptide: 1-aminocyclopropane-1-carboxylate deaminase (337 aa).

The residue at position 50 (Lys-50) is an N6-(pyridoxal phosphate)lysine. Ser-77 functions as the Nucleophile in the catalytic mechanism.

Belongs to the ACC deaminase/D-cysteine desulfhydrase family. As to quaternary structure, homotrimer. The cofactor is pyridoxal 5'-phosphate.

It catalyses the reaction 1-aminocyclopropane-1-carboxylate + H2O = 2-oxobutanoate + NH4(+). Its function is as follows. Catalyzes a cyclopropane ring-opening reaction, the irreversible conversion of 1-aminocyclopropane-1-carboxylate (ACC) to ammonia and alpha-ketobutyrate. Allows growth on ACC as a nitrogen source. The sequence is that of 1-aminocyclopropane-1-carboxylate deaminase from Methylobacterium sp. (strain 4-46).